Here is a 100-residue protein sequence, read N- to C-terminus: Co-chaperonin GroES (100 aa).

Belongs to the GroES chaperonin family. In terms of assembly, heptamer of 7 subunits arranged in a ring. Interacts with the chaperonin GroEL.

The protein localises to the cytoplasm. Together with the chaperonin GroEL, plays an essential role in assisting protein folding. The GroEL-GroES system forms a nano-cage that allows encapsulation of the non-native substrate proteins and provides a physical environment optimized to promote and accelerate protein folding. GroES binds to the apical surface of the GroEL ring, thereby capping the opening of the GroEL channel. This chain is Co-chaperonin GroES, found in Mycolicibacterium paratuberculosis (strain ATCC BAA-968 / K-10) (Mycobacterium paratuberculosis).